Here is a 154-residue protein sequence, read N- to C-terminus: 17.5 kDa class I heat shock protein (154 aa).

Residues 40 to 154 (ENSAFVSTRV…PDVKAIEISG (115 aa)) enclose the sHSP domain.

The protein belongs to the small heat shock protein (HSP20) family. In terms of assembly, forms oligomeric structures.

Its subcellular location is the cytoplasm. The polypeptide is 17.5 kDa class I heat shock protein (HSP17.5-E) (Glycine max (Soybean)).